Reading from the N-terminus, the 3326-residue chain is Protein unc-80 homolog (3326 aa).

Over residues 152 to 164 (IENQGSPGQPCRS) the composition is skewed to polar residues. 4 disordered regions span residues 152–178 (IENQ…RKTF), 243–267 (KRSS…QQGE), 283–317 (PKAT…RASL), and 450–469 (RKED…GKRR). Phosphoserine is present on Ser257. Residues 283–308 (PKATISGCHQGNSFDGSLSSQTSQER) are compositionally biased toward polar residues. Ser526 is subject to Phosphoserine. Disordered stretches follow at residues 536–560 (LSAR…SHGE), 697–785 (RKKS…DNIP), 967–1076 (GKKV…SRRI), 1405–1430 (EDSK…KKVP), and 1469–1516 (SSKL…LSNA). Composition is skewed to basic and acidic residues over residues 551 to 560 (LPDHSNSHGE) and 699 to 713 (KSEN…KRPS). Positions 723–737 (SSSSTSGFGAPSASG) are enriched in low complexity. Over residues 738 to 770 (AGDGGGEEGGGGDGGGGGGGGDGGGGGGGGGGP) the composition is skewed to gly residues. Residues 772-783 (EKNEKNQEKDDN) show a composition bias toward basic and acidic residues. Residues 1038-1055 (SQSAASDTSSQSEQDTSE) show a composition bias toward low complexity. The span at 1418–1429 (IKSDAGAEEKKV) shows a compositional bias: basic and acidic residues. Helical transmembrane passes span 2336 to 2356 (PFVL…DAAN) and 2466 to 2486 (IAAT…VEVL). Residues 2493–2515 (PQMSRSDQGHKGTTTANHTMSSG) are disordered. 2 consecutive transmembrane segments (helical) span residues 2853–2873 (GLAE…LVCF) and 2899–2919 (LALW…FVLL). A compositionally biased stretch (polar residues) spans 3010-3032 (NTGTGTVWEQDSEPSQQASQDTL). The disordered stretch occupies residues 3010-3052 (NTGTGTVWEQDSEPSQQASQDTLSRTDEEDEENDSVSMPSVVS). Ser3110 bears the Phosphoserine mark. 3 disordered regions span residues 3122 to 3222 (LQQP…VLTS), 3236 to 3271 (PKQS…LSDP), and 3296 to 3326 (NGTE…ESHV). Basic residues predominate over residues 3127–3136 (GRKRGLRQLR). Residues 3157 to 3168 (LSTTRRSIQPKT) are compositionally biased toward polar residues. Positions 3298–3309 (TENPLLSSQFTF) are enriched in polar residues. Residues 3315–3326 (GDTDSALDESHV) show a composition bias toward acidic residues.

Belongs to the unc-80 family. NALCN complex consists of NALCN and auxiliary subunits, UNC79, UNC80 and NACL1. These auxiliary subunits are essential for the NALCN complex function. Interacts (via N-terminus half) with NALCN; this interaction facilitates NALCN surface localization. Interacts (via C-terminus) with UNC79. UNC80 bridges NALCN to UNC79. In terms of processing, phosphorylated on tyrosine residues. In terms of tissue distribution, expressed almost exclusively in the brain. Expressed in hippocampus and ventral tegmental area neurons.

It localises to the cell membrane. The protein resides in the cell projection. The protein localises to the dendrite. In terms of biological role, auxiliary subunit of the NALCN sodium channel complex. The NALCN sodium channel complex is a voltage-gated ion channel responsible for the resting Na(+) permeability that controls neuronal excitability. This complex is activated by neuropeptides substance P, neurotensin. In addition, the channel is inhibited by extracellular Ca(2+) through the Ca(2+)-sensing receptor. UNC80 is essential for NALCN sensitivity to extracellular calcium. The sequence is that of Protein unc-80 homolog (Unc80) from Mus musculus (Mouse).